The primary structure comprises 523 residues: Bifunctional purine biosynthesis protein PurH (523 aa).

Positions 1-149 (MSDPVIKRAL…KNNESVTVIT (149 aa)) constitute an MGS-like domain.

This sequence belongs to the PurH family.

The catalysed reaction is (6R)-10-formyltetrahydrofolate + 5-amino-1-(5-phospho-beta-D-ribosyl)imidazole-4-carboxamide = 5-formamido-1-(5-phospho-D-ribosyl)imidazole-4-carboxamide + (6S)-5,6,7,8-tetrahydrofolate. It carries out the reaction IMP + H2O = 5-formamido-1-(5-phospho-D-ribosyl)imidazole-4-carboxamide. The protein operates within purine metabolism; IMP biosynthesis via de novo pathway; 5-formamido-1-(5-phospho-D-ribosyl)imidazole-4-carboxamide from 5-amino-1-(5-phospho-D-ribosyl)imidazole-4-carboxamide (10-formyl THF route): step 1/1. It participates in purine metabolism; IMP biosynthesis via de novo pathway; IMP from 5-formamido-1-(5-phospho-D-ribosyl)imidazole-4-carboxamide: step 1/1. The polypeptide is Bifunctional purine biosynthesis protein PurH (Chlorobaculum parvum (strain DSM 263 / NCIMB 8327) (Chlorobium vibrioforme subsp. thiosulfatophilum)).